A 234-amino-acid chain; its full sequence is Phycobilisome rod-core linker polypeptide cpcG (234 aa).

Positions 11–191 constitute a PBS-linker domain; that stretch reads SSQNHRVNSF…PRYGSDFKER (181 aa).

Belongs to the phycobilisome linker protein family. The phycobilisome is a hemidiscoidal structure that is composed of two distinct substructures: a core complex and a number of rods radiating from the core.

It localises to the plastid. The protein resides in the chloroplast thylakoid membrane. In terms of biological role, rod-core linker protein required for attachment of phycocyanin to allophycocyanin in cores of phycobilisomes. Linker polypeptides determine the state of aggregation and the location of the disk-shaped phycobiliprotein units within the phycobilisome and modulate their spectroscopic properties in order to mediate a directed and optimal energy transfer. In Cyanidium caldarium (Red alga), this protein is Phycobilisome rod-core linker polypeptide cpcG (cpcG).